We begin with the raw amino-acid sequence, 197 residues long: dITP/XTP pyrophosphatase (197 aa).

Position 8-13 (8-13) interacts with substrate; sequence TGNQGK. The active-site Proton acceptor is aspartate 69. Mg(2+) is bound at residue aspartate 69. Residues serine 70, 154–157, lysine 177, and 182–183 each bind substrate; these read FGYD and HR.

It belongs to the HAM1 NTPase family. Homodimer. Mg(2+) serves as cofactor.

The enzyme catalyses XTP + H2O = XMP + diphosphate + H(+). It catalyses the reaction dITP + H2O = dIMP + diphosphate + H(+). It carries out the reaction ITP + H2O = IMP + diphosphate + H(+). In terms of biological role, pyrophosphatase that catalyzes the hydrolysis of nucleoside triphosphates to their monophosphate derivatives, with a high preference for the non-canonical purine nucleotides XTP (xanthosine triphosphate), dITP (deoxyinosine triphosphate) and ITP. Seems to function as a house-cleaning enzyme that removes non-canonical purine nucleotides from the nucleotide pool, thus preventing their incorporation into DNA/RNA and avoiding chromosomal lesions. The polypeptide is dITP/XTP pyrophosphatase (Photobacterium profundum (strain SS9)).